A 171-amino-acid polypeptide reads, in one-letter code: UPF0398 protein SPy_1647/M5005_Spy1353 (171 aa).

This sequence belongs to the UPF0398 family.

The chain is UPF0398 protein SPy_1647/M5005_Spy1353 from Streptococcus pyogenes serotype M1.